A 195-amino-acid chain; its full sequence is MSDINQIEFSEISKKDELKSIIESLLFVSGEPLALKDICRIVEEDFKYVEDLMRELMNIYNGDSSRGIKIISLNGTYQLVTKTKNSEYIQKLLKKNVRQSLSQASLESLAIICYKQPITRVEIDEIRGVKSESAIQRLVEKNLVEETGRLEVPGRPILYGTTDEFLRHFALNDLGDLPSIELFEENNEVSDMVEE.

The protein belongs to the ScpB family. Homodimer. Homodimerization may be required to stabilize the binding of ScpA to the Smc head domains. Component of a cohesin-like complex composed of ScpA, ScpB and the Smc homodimer, in which ScpA and ScpB bind to the head domain of Smc. The presence of the three proteins is required for the association of the complex with DNA.

Its subcellular location is the cytoplasm. Participates in chromosomal partition during cell division. May act via the formation of a condensin-like complex containing Smc and ScpA that pull DNA away from mid-cell into both cell halves. The sequence is that of Segregation and condensation protein B from Clostridium perfringens (strain SM101 / Type A).